The primary structure comprises 123 residues: Small ribosomal subunit protein uS12 (123 aa).

D89 is modified (3-methylthioaspartic acid).

It belongs to the universal ribosomal protein uS12 family. As to quaternary structure, part of the 30S ribosomal subunit. Contacts proteins S8 and S17. May interact with IF1 in the 30S initiation complex.

Functionally, with S4 and S5 plays an important role in translational accuracy. In terms of biological role, interacts with and stabilizes bases of the 16S rRNA that are involved in tRNA selection in the A site and with the mRNA backbone. Located at the interface of the 30S and 50S subunits, it traverses the body of the 30S subunit contacting proteins on the other side and probably holding the rRNA structure together. The combined cluster of proteins S8, S12 and S17 appears to hold together the shoulder and platform of the 30S subunit. The polypeptide is Small ribosomal subunit protein uS12 (Rhizobium etli (strain ATCC 51251 / DSM 11541 / JCM 21823 / NBRC 15573 / CFN 42)).